Reading from the N-terminus, the 137-residue chain is MMPKRTKFRKQQKGQFAGLSKGATFVDFGEFGMQTLERGWVTSRQIEACRIAINRYLKRRGKVWIRIFPDKSVTKKPAETRMGKGKGAPDHWVAVVRPGRILFEVANVSREDAQDALRRAAAKLGIRTRFVKRVERV.

Belongs to the universal ribosomal protein uL16 family. Part of the 50S ribosomal subunit.

Binds 23S rRNA and is also seen to make contacts with the A and possibly P site tRNAs. This Chlamydia abortus (strain DSM 27085 / S26/3) (Chlamydophila abortus) protein is Large ribosomal subunit protein uL16.